The sequence spans 240 residues: MATLFIADLHLQTEEPAIVAGFLRFLAVEARQADALYILGDLFEAWIGDDDPNPLHREMAVAIKSLVDSGVPCFFIHGNRDFLIGKRFARESGMILLPQEKVLDLYGRNVLIMHGDTLCTDDAGYQAFRAKVHNPWIQRLFLTLPLFIRRRIAARMRAGSKAANSSKSLDIMDVNAQTVVAEMEKHRVQWLVHGHTHRPAVHELSANDQPAFRVVLGAWHHEGSMVKVTPDNVELIAFPL.

Residues Asp8, His10, Asp41, Asn79, and His114 each coordinate Mn(2+). 79–80 (NR) contributes to the substrate binding site. The substrate site is built by Asp122, Ser160, Asn164, Lys167, and His195. Residues His195 and His197 each contribute to the Mn(2+) site.

It belongs to the LpxH family. Mn(2+) is required as a cofactor.

The protein localises to the cell inner membrane. The enzyme catalyses UDP-2-N,3-O-bis[(3R)-3-hydroxytetradecanoyl]-alpha-D-glucosamine + H2O = 2-N,3-O-bis[(3R)-3-hydroxytetradecanoyl]-alpha-D-glucosaminyl 1-phosphate + UMP + 2 H(+). It participates in glycolipid biosynthesis; lipid IV(A) biosynthesis; lipid IV(A) from (3R)-3-hydroxytetradecanoyl-[acyl-carrier-protein] and UDP-N-acetyl-alpha-D-glucosamine: step 4/6. Its function is as follows. Hydrolyzes the pyrophosphate bond of UDP-2,3-diacylglucosamine to yield 2,3-diacylglucosamine 1-phosphate (lipid X) and UMP by catalyzing the attack of water at the alpha-P atom. Involved in the biosynthesis of lipid A, a phosphorylated glycolipid that anchors the lipopolysaccharide to the outer membrane of the cell. The sequence is that of UDP-2,3-diacylglucosamine hydrolase from Salmonella schwarzengrund (strain CVM19633).